The primary structure comprises 439 residues: GlutamylGlutaminyl-tRNA synthetase (439 aa).

The 'HIGH' region motif lies at 6 to 16; the sequence is PSPTGDMHIGN. The short motif at 232–236 is the 'KMSKS' region element; it reads KMSKR. Lysine 235 lines the ATP pocket.

It belongs to the class-I aminoacyl-tRNA synthetase family. Glutamate--tRNA ligase type 1 subfamily. As to quaternary structure, monomer.

Its subcellular location is the cytoplasm. The catalysed reaction is tRNA(Glu) + L-glutamate + ATP = L-glutamyl-tRNA(Gln) + AMP + diphosphate. In terms of biological role, aminoacylates tRNA(Gln) with glutamate. Does not aminoacylate tRNA(Glu). The protein is GlutamylGlutaminyl-tRNA synthetase (gltX2) of Helicobacter pylori (strain ATCC 700392 / 26695) (Campylobacter pylori).